A 354-amino-acid chain; its full sequence is uncharacterized protein (354 aa).

A signal peptide spans 1 to 21; the sequence is MRYLLIVITFFMGFSSLPAWA.

It to E.coli YbgO.

May be involved in a fimbrial system chaperoned by YqiH and exported by YqiG. This is an uncharacterized protein from Escherichia coli (strain K12).